The sequence spans 500 residues: NAD(P)H-quinone oxidoreductase chain 4, chloroplastic (500 aa).

The next 14 membrane-spanning stretches (helical) occupy residues 4–24, 35–55, 87–107, 113–130, 134–154, 167–187, 208–228, 242–262, 274–294, 305–325, 330–350, 386–406, 416–436, and 463–483; these read FPWL…IFFL, YTMG…CYHF, IGPI…AWPV, LFHF…GLFS, LLLF…LLSM, FILY…GMGL, GLEI…LPII, HYST…YGLI, SIFS…AALT, IAYS…SLTN, GAIL…FLGG, LALP…GIIT, IIIT…LLSM, and FVSI…DLVI.

This sequence belongs to the complex I subunit 4 family.

It is found in the plastid. It localises to the chloroplast thylakoid membrane. The catalysed reaction is a plastoquinone + NADH + (n+1) H(+)(in) = a plastoquinol + NAD(+) + n H(+)(out). The enzyme catalyses a plastoquinone + NADPH + (n+1) H(+)(in) = a plastoquinol + NADP(+) + n H(+)(out). This chain is NAD(P)H-quinone oxidoreductase chain 4, chloroplastic, found in Lemna minor (Common duckweed).